Reading from the N-terminus, the 404-residue chain is Lysophospholipid transporter LplT (404 aa).

Transmembrane regions (helical) follow at residues 16-36 (MIAV…LLFA), 53-73 (ILQM…GQFA), 91-111 (AGAL…LVGV), 139-159 (MMEA…GVLA), 164-184 (GVAL…NMFI), 195-213 (SWRP…LVLW), 227-247 (LFWG…PIAL), 253-273 (ATPT…AGAA), 285-305 (CLPA…QHSM), 310-330 (LLLI…NALL), 350-370 (GENT…KLGV), and 372-392 (VIAV…LLWG).

It belongs to the major facilitator superfamily. LplT (TC 2.A.1.42) family.

It localises to the cell inner membrane. In terms of biological role, catalyzes the facilitated diffusion of 2-acyl-glycero-3-phosphoethanolamine (2-acyl-GPE) into the cell. This is Lysophospholipid transporter LplT from Yersinia enterocolitica serotype O:8 / biotype 1B (strain NCTC 13174 / 8081).